Reading from the N-terminus, the 514-residue chain is Beta-glucosidase 21 (514 aa).

The signal sequence occupies residues 1-25; it reads MERPLHLLLVFLSSPWLLLLQGVSS. Residues glutamine 47 and histidine 147 each coordinate a beta-D-glucoside. Residue glutamate 193 is the Proton donor of the active site. Cysteine 212 and cysteine 220 are joined by a disulfide. Residues asparagine 219 and asparagine 224 are each glycosylated (N-linked (GlcNAc...) asparagine). Residues tyrosine 336 and glutamate 406 each coordinate a beta-D-glucoside. Glutamate 406 serves as the catalytic Nucleophile. N-linked (GlcNAc...) asparagine glycosylation is present at asparagine 407. The a beta-D-glucoside site is built by tryptophan 448 and phenylalanine 465. The N-linked (GlcNAc...) asparagine glycan is linked to asparagine 494.

Belongs to the glycosyl hydrolase 1 family.

It carries out the reaction Hydrolysis of terminal, non-reducing beta-D-glucosyl residues with release of beta-D-glucose.. In Oryza sativa subsp. japonica (Rice), this protein is Beta-glucosidase 21 (BGLU21).